A 305-amino-acid polypeptide reads, in one-letter code: Putative lipid kinase SAB0675c (305 aa).

In terms of domain architecture, DAGKc spans Asn3 to Tyr139. Residues Ser44, Gly74–Glu80, and Thr101 contribute to the ATP site. Mg(2+) is bound by residues Ser220, Asp223, and Glu225. Glu281 serves as the catalytic Proton acceptor.

It belongs to the diacylglycerol/lipid kinase family. The cofactor is Mg(2+).

Its function is as follows. May catalyze the ATP-dependent phosphorylation of lipids other than diacylglycerol (DAG). The chain is Putative lipid kinase SAB0675c from Staphylococcus aureus (strain bovine RF122 / ET3-1).